The following is an 82-amino-acid chain: Nuclear protein 1 (82 aa).

The interval 1–82 (MATFPPATSA…SERKKRGARR (82 aa)) is disordered. A compositionally biased stretch (acidic residues) spans 17 to 28 (PEDEDSSLDESD). The short motif at 65–82 (KLVTKLQNSERKKRGARR) is the Nuclear localization signal element.

The protein belongs to the NUPR family. In terms of assembly, monomer. Directly interacts with MSL1 and binds MORF4L1, two components of histone acetyltransferase complex; the interaction with MORF4L1 may be mediated by MSL1. Interacts with EP300; this interaction enhances the effect of EP300 on PAX2 transcription factor activity. Interacts with PAXIP1; this interaction prevents PAXIP1 inhibition of PAX2 transcription factor activity. Interacts with COPS5; this interaction allows COPS5-dependent CDKN1B nuclear to cytoplasm translocation. Interacts with RNF2. Interacts with FOXO3; this interaction represses FOXO3 transactivation. Interacts with PTMA; negatively regulates apoptotic process. Interacts with MYOD1, EP300 and DDX5; this interaction coordinates the association of anti-proliferative and pro-myogenic proteins at the myogenin promoter. Interacts with TP53; interaction is stress-dependent. Forms a complex with EP300 and TP53; this complex binds CDKN1A promoter leading to transcriptional induction of CDKN1A. Post-translationally, phosphorylated in vitro by PKA and CK. Phosphorylation promotes DNA-binding activity. In terms of processing, acetylated by EP300 in vitro. As to expression, widely expressed, with high levels in liver, pancreas, prostate, ovary, colon, thyroid, spinal cord, trachea and adrenal gland, moderate levels in heart, placenta, lung, skeletal muscle, kidney, testis, small intestine, stomach and lymph node, and low levels in brain, spleen, thymus and bone marrow. Not detected in peripheral blood leukocytes.

Its subcellular location is the nucleus. The protein localises to the cytoplasm. It localises to the perinuclear region. Functionally, transcription regulator that converts stress signals into a program of gene expression that empowers cells with resistance to the stress induced by a change in their microenvironment. Thereby participates in the regulation of many processes namely cell-cycle, apoptosis, autophagy and DNA repair responses. Controls cell cycle progression and protects cells from genotoxic stress induced by doxorubicin through the complex formation with TP53 and EP300 that binds CDKN1A promoter leading to transcriptional induction of CDKN1A. Protects pancreatic cancer cells from stress-induced cell death by binding the RELB promoter and activating its transcription, leading to IER3 transactivation. Negatively regulates apoptosis through interaction with PTMA. Inhibits autophagy-induced apoptosis in cardiac cells through FOXO3 interaction, inducing cytoplasmic translocation of FOXO3 thereby preventing the FOXO3 association with the pro-autophagic BNIP3 promoter. Inhibits cell growth and facilitates programmed cell death by apoptosis after adriamycin-induced DNA damage through transactivation of TP53. Regulates methamphetamine-induced apoptosis and autophagy through DDIT3-mediated endoplasmic reticulum stress pathway. Participates in DNA repair following gamma-irradiation by facilitating DNA access of the transcription machinery through interaction with MSL1 leading to inhibition of histone H4' Lys-16' acetylation (H4K16ac). Coactivator of PAX2 transcription factor activity, both by recruiting EP300 to increase PAX2 transcription factor activity and by binding PAXIP1 to suppress PAXIP1-induced inhibition on PAX2. Positively regulates cell cycle progression through interaction with COPS5 inducing cytoplasmic translocation of CDKN1B leading to the CDKN1B degradation. Coordinates, through its interaction with EP300, the assiociation of MYOD1, EP300 and DDX5 to the MYOG promoter, leading to inhibition of cell-cycle progression and myogenic differentiation promotion. Negatively regulates beta cell proliferation via inhibition of cell-cycle regulatory genes expression through the suppression of their promoter activities. Also required for LHB expression and ovarian maturation. Exacerbates CNS inflammation and demyelination upon cuprizone treatment. The polypeptide is Nuclear protein 1 (Homo sapiens (Human)).